Consider the following 309-residue polypeptide: UPF0252 protein PH0672 (309 aa).

2 helical membrane-spanning segments follow: residues 5 to 25 (SVIIFIVIMLGIGCLNLNESI) and 106 to 126 (AVLTAGLLLASNISPVYLMIF).

The protein belongs to the UPF0252 family.

The protein resides in the cell membrane. This Pyrococcus horikoshii (strain ATCC 700860 / DSM 12428 / JCM 9974 / NBRC 100139 / OT-3) protein is UPF0252 protein PH0672.